The primary structure comprises 171 residues: MFDIGFSELLLVFIIGLVVLGPQRLPVAVKTVAGWIRALRSLATTVQNELTQELKLQEFQDSLKKVEKASLTNLTPELKASMDELRQAAESMKRSYVANDPEKASDEAHTIHNPVVKDNETAHEGVTPAAAQTQASSPEQKPETTPEPVVKPAADAEPKTAAPSPSSSDKP.

A helical transmembrane segment spans residues 1 to 21 (MFDIGFSELLLVFIIGLVVLG). The segment at 117–171 (KDNETAHEGVTPAAAQTQASSPEQKPETTPEPVVKPAADAEPKTAAPSPSSSDKP) is disordered. The segment covering 130-139 (AAQTQASSPE) has biased composition (polar residues).

The protein belongs to the TatB family. The Tat system comprises two distinct complexes: a TatABC complex, containing multiple copies of TatA, TatB and TatC subunits, and a separate TatA complex, containing only TatA subunits. Substrates initially bind to the TatABC complex, which probably triggers association of the separate TatA complex to form the active translocon.

The protein localises to the cell inner membrane. Its function is as follows. Part of the twin-arginine translocation (Tat) system that transports large folded proteins containing a characteristic twin-arginine motif in their signal peptide across membranes. Together with TatC, TatB is part of a receptor directly interacting with Tat signal peptides. TatB may form an oligomeric binding site that transiently accommodates folded Tat precursor proteins before their translocation. This is Sec-independent protein translocase protein TatB from Escherichia coli O6:K15:H31 (strain 536 / UPEC).